Reading from the N-terminus, the 456-residue chain is Phytase A (456 aa).

The signal sequence occupies residues 1–24 (MSSMASVLFAALAISGVQVTPSRG). Gln-37, Tyr-38, Arg-68, His-69, Arg-72, Thr-75, and Arg-152 together coordinate 1D-myo-inositol hexakisphosphate. Disulfide bonds link Cys-58/Cys-396, Cys-197/Cys-450, Cys-246/Cys-264, and Cys-421/Cys-429. The active-site Nucleophile is the His-69. Lys-283 provides a ligand contact to 1D-myo-inositol hexakisphosphate. Asn-317 carries an N-linked (GlcNAc...) asparagine glycan. 1D-myo-inositol hexakisphosphate is bound by residues His-343 and Asp-344. N-linked (GlcNAc...) asparagine glycosylation occurs at Asn-358.

Belongs to the histidine acid phosphatase family. As to quaternary structure, monomer.

The protein resides in the secreted. The enzyme catalyses 1D-myo-inositol hexakisphosphate + H2O = 1D-myo-inositol 1,2,4,5,6-pentakisphosphate + phosphate. It carries out the reaction 1D-myo-inositol 1,2,4,5,6-pentakisphosphate + H2O = 1D-myo-inositol 1,2,5,6-tetrakisphosphate + phosphate. The catalysed reaction is 1D-myo-inositol 1,2,5,6-tetrakisphosphate + H2O = 1D-myo-inositol 1,2,6-trisphosphate + phosphate. It catalyses the reaction 1D-myo-inositol 1,2,6-trisphosphate + H2O = 1D-myo-inositol 1,2-bisphosphate + phosphate. The enzyme catalyses 1D-myo-inositol 1,2-bisphosphate + H2O = 1D-myo-inositol 2-phosphate + phosphate. Functionally, catalyzes the phosphate monoester hydrolysis of phytic acid (myo-inositol hexakisphosphate), which results in the stepwise formation of myo-inositol pentakis-, tetrakis-, tris-, bis-, and monophosphates, as well as the liberation of inorganic phosphate. Myo-inositol 2-monophosphate is the end product. This Arthroderma benhamiae (strain ATCC MYA-4681 / CBS 112371) (Trichophyton mentagrophytes) protein is Phytase A.